We begin with the raw amino-acid sequence, 362 residues long: Aminomethyltransferase (362 aa).

It belongs to the GcvT family. The glycine cleavage system is composed of four proteins: P, T, L and H.

The catalysed reaction is N(6)-[(R)-S(8)-aminomethyldihydrolipoyl]-L-lysyl-[protein] + (6S)-5,6,7,8-tetrahydrofolate = N(6)-[(R)-dihydrolipoyl]-L-lysyl-[protein] + (6R)-5,10-methylene-5,6,7,8-tetrahydrofolate + NH4(+). The glycine cleavage system catalyzes the degradation of glycine. This Chloroherpeton thalassium (strain ATCC 35110 / GB-78) protein is Aminomethyltransferase.